The chain runs to 165 residues: Endoribonuclease YbeY (165 aa).

Residues histidine 130, histidine 134, and histidine 140 each contribute to the Zn(2+) site.

It belongs to the endoribonuclease YbeY family. It depends on Zn(2+) as a cofactor.

The protein localises to the cytoplasm. In terms of biological role, single strand-specific metallo-endoribonuclease involved in late-stage 70S ribosome quality control and in maturation of the 3' terminus of the 16S rRNA. This Streptococcus pneumoniae serotype 2 (strain D39 / NCTC 7466) protein is Endoribonuclease YbeY.